Consider the following 146-residue polypeptide: MLSQEFFNSFITIYRPYLKLAEPILEKHNIYYGQWLILRDIAKHQPTTLIEISHRRAIEKPTARKTLKALIENDLITVENSLEDKRQKFLTLTPKGHELYEIVCLDVQKLQQAVVAKTNISQDQMQETINVMNQIHEILLKEAHND.

One can recognise an HTH marR-type domain in the interval Met-1 to Glu-137.

This is an uncharacterized protein from Staphylococcus aureus (strain N315).